A 330-amino-acid polypeptide reads, in one-letter code: 4-hydroxythreonine-4-phosphate dehydrogenase (330 aa).

Residues H136 and T137 each contribute to the substrate site. Residues H166, H211, and H266 each coordinate a divalent metal cation. 3 residues coordinate substrate: K274, N283, and R292.

The protein belongs to the PdxA family. In terms of assembly, homodimer. Zn(2+) is required as a cofactor. Mg(2+) serves as cofactor. The cofactor is Co(2+).

It is found in the cytoplasm. It carries out the reaction 4-(phosphooxy)-L-threonine + NAD(+) = 3-amino-2-oxopropyl phosphate + CO2 + NADH. The protein operates within cofactor biosynthesis; pyridoxine 5'-phosphate biosynthesis; pyridoxine 5'-phosphate from D-erythrose 4-phosphate: step 4/5. Functionally, catalyzes the NAD(P)-dependent oxidation of 4-(phosphooxy)-L-threonine (HTP) into 2-amino-3-oxo-4-(phosphooxy)butyric acid which spontaneously decarboxylates to form 3-amino-2-oxopropyl phosphate (AHAP). In Sodalis glossinidius (strain morsitans), this protein is 4-hydroxythreonine-4-phosphate dehydrogenase.